The sequence spans 312 residues: Malate dehydrogenase (312 aa).

NAD(+)-binding positions include 7–13 and Asp34; that span reads GAAGGIG. Residues Arg81 and Arg87 each coordinate substrate. NAD(+)-binding positions include Asn94 and 117-119; that span reads ITN. Asn119 and Arg153 together coordinate substrate. His177 functions as the Proton acceptor in the catalytic mechanism. Met227 provides a ligand contact to NAD(+).

It belongs to the LDH/MDH superfamily. MDH type 1 family. Homodimer.

It carries out the reaction (S)-malate + NAD(+) = oxaloacetate + NADH + H(+). Functionally, catalyzes the reversible oxidation of malate to oxaloacetate. In Salmonella gallinarum (strain 287/91 / NCTC 13346), this protein is Malate dehydrogenase.